The sequence spans 125 residues: Ribosome-binding factor A (125 aa).

The protein belongs to the RbfA family. Monomer. Binds 30S ribosomal subunits, but not 50S ribosomal subunits or 70S ribosomes.

It is found in the cytoplasm. In terms of biological role, one of several proteins that assist in the late maturation steps of the functional core of the 30S ribosomal subunit. Associates with free 30S ribosomal subunits (but not with 30S subunits that are part of 70S ribosomes or polysomes). Required for efficient processing of 16S rRNA. May interact with the 5'-terminal helix region of 16S rRNA. This chain is Ribosome-binding factor A, found in Xylella fastidiosa (strain 9a5c).